A 906-amino-acid polypeptide reads, in one-letter code: Inter-alpha-trypsin inhibitor heavy chain H1 (906 aa).

A signal peptide spans 1–22 (MGLRGLLCVCLVSLLALQAVAA). Positions 23–29 (QGSPTRN) are excised as a propeptide. The VIT domain maps to 32–161 (GGKKRMAVDA…KATFRLTYEE (130 aa)). C55 is a glycosylation site (S-linked (Hex...) cysteine). Position 124 is a phosphoserine (S124). A VWFA domain is found at 287 to 470 (NVVFVIDISS…QQLQGFYEQV (184 aa)). 2 positions are modified to phosphothreonine: T397 and T402. N583 carries an N-linked (GlcNAc...) asparagine glycan. A glycan (O-linked (GalNAc...) serine) is linked at S643. T648 is a glycosylation site (O-linked (GalNAc...) threonine). The residue at position 667 (D667) is an Aspartate 1-(chondroitin 4-sulfate)-ester. Residues 668-906 (PHFLIHVPQK…HTDYIVPDIF (239 aa)) constitute a propeptide that is removed on maturation. N745 is a glycosylation site (N-linked (GlcNAc...) asparagine).

It belongs to the ITIH family. In terms of assembly, I-alpha-I plasma protease inhibitors are assembled from one or two heavy chains (HC) and one light chain, bikunin. Inter-alpha-inhibitor (I-alpha-I) is composed of ITIH1/HC1, ITIH2/HC2 and bikunin. Interacts with TNFAIP6 (via Link and CUB domains). Heavy chains are linked to bikunin via chondroitin 4-sulfate esterified to the alpha-carboxyl of the C-terminal aspartate after propeptide cleavage. Post-translationally, the S-linked glycan is composed of two 6-carbon sugars, possibly Glc or Gal.

Its subcellular location is the secreted. May act as a carrier of hyaluronan in serum or as a binding protein between hyaluronan and other matrix protein, including those on cell surfaces in tissues to regulate the localization, synthesis and degradation of hyaluronan which are essential to cells undergoing biological processes. This chain is Inter-alpha-trypsin inhibitor heavy chain H1 (ITIH1), found in Bos taurus (Bovine).